A 1101-amino-acid polypeptide reads, in one-letter code: Zinc finger SWIM domain-containing protein 4 (1101 aa).

The interval 1 to 29 (MEPPAAKRSRGCPAGDEPGTGARRSRPEP) is disordered. Residues 134 to 171 (YHVSISFDRCKITSVSCGCDNRDLFYCAHVVALSLYRI) form an SWIM-type zinc finger.

The sequence is that of Zinc finger SWIM domain-containing protein 4 (Zswim4) from Mus musculus (Mouse).